The following is a 78-amino-acid chain: Translational regulator CsrA (78 aa).

The protein belongs to the CsrA/RsmA family. As to quaternary structure, homodimer; the beta-strands of each monomer intercalate to form a hydrophobic core, while the alpha-helices form wings that extend away from the core.

Its subcellular location is the cytoplasm. Its function is as follows. A translational regulator that binds mRNA to regulate translation initiation and/or mRNA stability. Usually binds in the 5'-UTR at or near the Shine-Dalgarno sequence preventing ribosome-binding, thus repressing translation. Its main target seems to be the major flagellin gene, while its function is anatagonized by FliW. The sequence is that of Translational regulator CsrA from Borrelia hermsii (strain HS1 / DAH).